The sequence spans 135 residues: Agouti-signaling protein (135 aa).

An N-terminal signal peptide occupies residues 1–22 (MNILRLLLATLLVCLCLLTAYS). N39 is a glycosylation site (N-linked (GlcNAc...) asparagine). The disordered stretch occupies residues 56–101 (NKKSKKISRKEAEKKRSSKKKASMKNVAQPRRPRPPPPAPCVATRD). Cystine bridges form between C96–C111, C103–C117, C110–C128, C114–C135, and C119–C126. Positions 96 to 135 (CVATRDSCKPPAPACCDPCASCQCRFFRSSCSCRVLNPTC) constitute an Agouti domain.

Its subcellular location is the secreted. Its function is as follows. Involved in the regulation of melanogenesis. The binding of ASP to MC1R precludes alpha-MSH initiated signaling and thus blocks production of cAMP, leading to a down-regulation of eumelanogenesis (brown/black pigment) and thus increasing synthesis of pheomelanin (yellow/red pigment). This Felis catus (Cat) protein is Agouti-signaling protein (ASIP).